The chain runs to 374 residues: N-acetyldiaminopimelate deacetylase (374 aa).

Residue Asp69 is part of the active site. Glu128 functions as the Proton acceptor in the catalytic mechanism.

This sequence belongs to the peptidase M20A family. N-acetyldiaminopimelate deacetylase subfamily.

It carries out the reaction N-acetyl-(2S,6S)-2,6-diaminopimelate + H2O = (2S,6S)-2,6-diaminopimelate + acetate. It functions in the pathway amino-acid biosynthesis; L-lysine biosynthesis via DAP pathway; LL-2,6-diaminopimelate from (S)-tetrahydrodipicolinate (acetylase route): step 3/3. Catalyzes the conversion of N-acetyl-diaminopimelate to diaminopimelate and acetate. The polypeptide is N-acetyldiaminopimelate deacetylase (ykuR) (Bacillus subtilis (strain 168)).